Here is a 149-residue protein sequence, read N- to C-terminus: UPF0756 membrane protein Nther_1957 (149 aa).

4 consecutive transmembrane segments (helical) span residues 5–25 (IVVLLFIFLIALIGKNDLVAT), 52–72 (LGILLLTLSVLTPFAAGDIMP), 85–105 (LIAVFSGIVASYLTGHGVELL), and 111–131 (VMVGLIVGSIIGASFLKGVPA).

It belongs to the UPF0756 family.

The protein resides in the cell membrane. In Natranaerobius thermophilus (strain ATCC BAA-1301 / DSM 18059 / JW/NM-WN-LF), this protein is UPF0756 membrane protein Nther_1957.